A 468-amino-acid chain; its full sequence is Phosphomethylpyrimidine synthase (468 aa).

Substrate contacts are provided by residues Asn-82, Met-111, Tyr-141, His-177, 197–199 (SRG), 238–241 (DSLR), and Glu-277. Zn(2+) is bound at residue His-281. Tyr-304 contributes to the substrate binding site. A Zn(2+)-binding site is contributed by His-345. Positions 425, 428, and 433 each coordinate [4Fe-4S] cluster.

It belongs to the ThiC family. The cofactor is [4Fe-4S] cluster.

It carries out the reaction 5-amino-1-(5-phospho-beta-D-ribosyl)imidazole + S-adenosyl-L-methionine = 4-amino-2-methyl-5-(phosphooxymethyl)pyrimidine + CO + 5'-deoxyadenosine + formate + L-methionine + 3 H(+). It participates in cofactor biosynthesis; thiamine diphosphate biosynthesis. Catalyzes the synthesis of the hydroxymethylpyrimidine phosphate (HMP-P) moiety of thiamine from aminoimidazole ribotide (AIR) in a radical S-adenosyl-L-methionine (SAM)-dependent reaction. The polypeptide is Phosphomethylpyrimidine synthase (Prochlorococcus marinus (strain SARG / CCMP1375 / SS120)).